Consider the following 530-residue polypeptide: GMP synthase [glutamine-hydrolyzing] (530 aa).

Residues R4–D205 form the Glutamine amidotransferase type-1 domain. C84 functions as the Nucleophile in the catalytic mechanism. Active-site residues include H179 and E181. Residues W206 to R398 form the GMPS ATP-PPase domain. S233–S239 is an ATP binding site.

As to quaternary structure, homodimer.

The catalysed reaction is XMP + L-glutamine + ATP + H2O = GMP + L-glutamate + AMP + diphosphate + 2 H(+). The protein operates within purine metabolism; GMP biosynthesis; GMP from XMP (L-Gln route): step 1/1. In terms of biological role, catalyzes the synthesis of GMP from XMP. This Bordetella bronchiseptica (strain ATCC BAA-588 / NCTC 13252 / RB50) (Alcaligenes bronchisepticus) protein is GMP synthase [glutamine-hydrolyzing].